The sequence spans 432 residues: Phosphomethylpyrimidine synthase (432 aa).

Substrate contacts are provided by residues Asn-66, Met-95, Tyr-124, His-163, 185–187 (SRG), 226–229 (DGLR), and Glu-265. A Zn(2+)-binding site is contributed by His-269. A substrate-binding site is contributed by Tyr-292. His-333 provides a ligand contact to Zn(2+). [4Fe-4S] cluster-binding residues include Cys-409, Cys-412, and Cys-416.

Belongs to the ThiC family. Requires [4Fe-4S] cluster as cofactor.

It carries out the reaction 5-amino-1-(5-phospho-beta-D-ribosyl)imidazole + S-adenosyl-L-methionine = 4-amino-2-methyl-5-(phosphooxymethyl)pyrimidine + CO + 5'-deoxyadenosine + formate + L-methionine + 3 H(+). The protein operates within cofactor biosynthesis; thiamine diphosphate biosynthesis. Its function is as follows. Catalyzes the synthesis of the hydroxymethylpyrimidine phosphate (HMP-P) moiety of thiamine from aminoimidazole ribotide (AIR) in a radical S-adenosyl-L-methionine (SAM)-dependent reaction. This chain is Phosphomethylpyrimidine synthase, found in Moorella thermoacetica (strain ATCC 39073 / JCM 9320).